Reading from the N-terminus, the 256-residue chain is 5'-nucleotidase SurE (256 aa).

Asp-8, Asp-9, Ser-39, and Asn-91 together coordinate a divalent metal cation.

Belongs to the SurE nucleotidase family. The cofactor is a divalent metal cation.

The protein localises to the cytoplasm. The catalysed reaction is a ribonucleoside 5'-phosphate + H2O = a ribonucleoside + phosphate. Functionally, nucleotidase that shows phosphatase activity on nucleoside 5'-monophosphates. This chain is 5'-nucleotidase SurE, found in Marinobacter nauticus (strain ATCC 700491 / DSM 11845 / VT8) (Marinobacter aquaeolei).